We begin with the raw amino-acid sequence, 523 residues long: MSSMQFSSVLPLEGKACVSPVRREGSACERLKIGDSSSIRHERASRRMCNGGARGPAATGAQCVLTSDASPADTLVLRTSFRRNYADPNEVAAVILGGGTGTQLFPLTSTRATPAVPIGGCYRLIDIPMSNCFNSGINKIFVMTQFNSASLNRHIHRTYLGGGINFTDGSVEVLAATQMPGEAAGWFRGTADAVRKFIWVLEDYYKHKSIEHILILSGDQLYRMDYMELVQKHVDDNADITLSCAPVGESRASEYGLVKFDSSGRVIQFSEKPKGDDLEAMKVDTSFLNFAIDDPAKYPYIASMGVYVFKRDVLLNLLKSRYAELHDFGSEILPRALHDHNVQAYVFTDYWEDIGTIRSFFDANMALCEQPPKFEFYDPKTPFFTSPRYLPPTKSDKCRIKEAIISHGCFLRECKIEHSIIGVRSRLNSGSELKNAMMMGADSYETEDEISRLMSEGKVPIGVGENTKISNCIIDMNARIGRDVVISNKEGVQEADRPEEGYYIRSGIVVIQKNATIKDGTVV.

A chloroplast-targeting transit peptide spans 1–49 (MSSMQFSSVLPLEGKACVSPVRREGSACERLKIGDSSSIRHERASRRMC).

Belongs to the bacterial/plant glucose-1-phosphate adenylyltransferase family. As to quaternary structure, heterotetramer. Starchy endosperm and roots.

The protein resides in the plastid. It is found in the chloroplast. It localises to the amyloplast. It catalyses the reaction alpha-D-glucose 1-phosphate + ATP + H(+) = ADP-alpha-D-glucose + diphosphate. It functions in the pathway glycan biosynthesis; starch biosynthesis. Its activity is regulated as follows. Highly active without 3'phosphoglycerate, and is only slightly affected by the activator 3'phosphoglycerate and inhibitor orthophosphate. This protein plays a role in synthesis of starch. It catalyzes the synthesis of the activated glycosyl donor, ADP-glucose from Glc-1-P and ATP. The chain is Glucose-1-phosphate adenylyltransferase large subunit 1, chloroplastic/amyloplastic from Hordeum vulgare (Barley).